The chain runs to 539 residues: Putative serine/threonine-protein kinase L670 (539 aa).

One can recognise a Cyclin N-terminal domain in the interval 1–115 (MSLFNNHPEL…ILKVFKFGLH (115 aa)). One can recognise a Protein kinase domain in the interval 258-519 (MNVIEKLGIG…VLKIFSECFV (262 aa)). ATP-binding positions include 264 to 272 (LGIGSFGLV) and lysine 285. Catalysis depends on aspartate 375, which acts as the Proton acceptor.

The protein belongs to the protein kinase superfamily. Ser/Thr protein kinase family.

It carries out the reaction L-seryl-[protein] + ATP = O-phospho-L-seryl-[protein] + ADP + H(+). The enzyme catalyses L-threonyl-[protein] + ATP = O-phospho-L-threonyl-[protein] + ADP + H(+). The chain is Putative serine/threonine-protein kinase L670 from Acanthamoeba polyphaga mimivirus (APMV).